A 192-amino-acid polypeptide reads, in one-letter code: DNA dC-&gt;dU-editing enzyme APOBEC-3Ca (192 aa).

A CMP/dCMP-type deaminase domain is found at 15–141; the sequence is IDPNTFRFHF…PNYQEGLCKL (127 aa). Position 69 (His69) interacts with Zn(2+). The Proton donor role is filled by Glu71. Positions 100 and 103 each coordinate Zn(2+).

It belongs to the cytidine and deoxycytidylate deaminase family. In terms of assembly, (Microbial infection) Interacts with feline foamy virus protein Bet. This interaction does not induce APOBEC3Ca degradation but prevents its dimerization and incorporation into the virion. Requires Zn(2+) as cofactor.

Its subcellular location is the nucleus. The protein localises to the cytoplasm. It carries out the reaction a 2'-deoxycytidine in single-stranded DNA + H2O + H(+) = a 2'-deoxyuridine in single-stranded DNA + NH4(+). In terms of biological role, DNA deaminase (cytidine deaminase) which acts as an inhibitor of retrovirus replication and retrotransposon mobility via deaminase-dependent and -independent mechanisms. Selectively targets single-stranded DNA and does not deaminate double-stranded DNA or single- or double-stranded RNA. Does not reduce infectivity of foamy feline virus, feline immunodeficiency virus or feline leukemia virus. This chain is DNA dC-&gt;dU-editing enzyme APOBEC-3Ca, found in Felis catus (Cat).